We begin with the raw amino-acid sequence, 165 residues long: Crossover junction endodeoxyribonuclease RuvC (165 aa).

Catalysis depends on residues D7, E66, and D138. Positions 7, 66, and 138 each coordinate Mg(2+).

Belongs to the RuvC family. Homodimer which binds Holliday junction (HJ) DNA. The HJ becomes 2-fold symmetrical on binding to RuvC with unstacked arms; it has a different conformation from HJ DNA in complex with RuvA. In the full resolvosome a probable DNA-RuvA(4)-RuvB(12)-RuvC(2) complex forms which resolves the HJ. It depends on Mg(2+) as a cofactor.

The protein resides in the cytoplasm. The catalysed reaction is Endonucleolytic cleavage at a junction such as a reciprocal single-stranded crossover between two homologous DNA duplexes (Holliday junction).. In terms of biological role, the RuvA-RuvB-RuvC complex processes Holliday junction (HJ) DNA during genetic recombination and DNA repair. Endonuclease that resolves HJ intermediates. Cleaves cruciform DNA by making single-stranded nicks across the HJ at symmetrical positions within the homologous arms, yielding a 5'-phosphate and a 3'-hydroxyl group; requires a central core of homology in the junction. The consensus cleavage sequence is 5'-(A/T)TT(C/G)-3'. Cleavage occurs on the 3'-side of the TT dinucleotide at the point of strand exchange. HJ branch migration catalyzed by RuvA-RuvB allows RuvC to scan DNA until it finds its consensus sequence, where it cleaves and resolves the cruciform DNA. The chain is Crossover junction endodeoxyribonuclease RuvC from Ruegeria pomeroyi (strain ATCC 700808 / DSM 15171 / DSS-3) (Silicibacter pomeroyi).